The primary structure comprises 379 residues: Fimbrium subunit Fim1C (379 aa).

An N-terminal signal peptide occupies residues 1 to 17 (MEVKSLLMVMATLTIAG). A lipid anchor (N-palmitoyl cysteine) is attached at Cys-18. Cys-18 is lipidated: S-diacylglycerol cysteine. Residues 18–45 (CSQNEMTEMNPDTNRTIGLDVYTEVQTR) constitute a propeptide that is removed on maturation.

Belongs to the bacteroidetes fimbrillin superfamily. Mfa-like family. May be part of the fimbrial tip.

The protein resides in the fimbrium. It is found in the cell outer membrane. Probably a component of the fimbrium tip. Fimbriae are filamentous appendages on the cell surface that mediate cell adhesion and biofilm formation. This Phocaeicola vulgatus (strain ATCC 8482 / DSM 1447 / JCM 5826 / CCUG 4940 / NBRC 14291 / NCTC 11154) (Bacteroides vulgatus) protein is Fimbrium subunit Fim1C (fim1C).